An 81-amino-acid polypeptide reads, in one-letter code: Exodeoxyribonuclease 7 small subunit (81 aa).

Belongs to the XseB family. As to quaternary structure, heterooligomer composed of large and small subunits.

The protein resides in the cytoplasm. The catalysed reaction is Exonucleolytic cleavage in either 5'- to 3'- or 3'- to 5'-direction to yield nucleoside 5'-phosphates.. In terms of biological role, bidirectionally degrades single-stranded DNA into large acid-insoluble oligonucleotides, which are then degraded further into small acid-soluble oligonucleotides. This chain is Exodeoxyribonuclease 7 small subunit, found in Pasteurella multocida (strain Pm70).